A 648-amino-acid polypeptide reads, in one-letter code: MTDRLVPASLALRDDGTLVSPEFGDLHLGASGALAHRVFVAGNGLPTRWQDRRTFTIVATGFGAGGSFLAAWAAWRDDPARCERLHFVAVEPHPFSRDDLRRAATHIVADTTISADVEALADAWPMLVPGLHRLEFDEGRVVLTLAFGESIDMLGKIVARADAFCLDGLASSSDADLQSTDVVRALSKIAGEHATFAVHASSDALKHALGKSGFTYREVDDLLVGEYAPRWRARRHEPPLALPVATRRAIVIGAGLAGCAVVERLAARGWEVTLIERHDRIASDASGNPAGVFHPLMTRDDNVASRLTRGGFLHAIARWRALENAGHAFARSTNGMIHLAESADDFERMRDAFDAFGPPSDYVSLLDIEAARAHLNLSVAQGGLLFPHGGAVWPAGLCAAQYAAAGERVRLLASTRVAKLERRGDAWHALDDAGGTLAEAPVVVLANAGDAARLAGLQHVALQPVRGQLTLLPPGSTAPLPCPTIGDGYAVPLDDGTLLIGATFEPDDVDPAMRAAGHLENLERVRHLLPGLIGDLPDPDTLRGRVAFRWVVGDRLPLLGPLADEAGAIANARALSGAQARDLPRLPGLYGAFGFGSRGLVWAALGAELIASQLEGEPWPLERELADAVDPARFLIRALRARRVGRAG.

The tract at residues 1 to 228 (MTDRLVPASL…VDDLLVGEYA (228 aa)) is tRNA (mnm(5)s(2)U34)-methyltransferase. The FAD-dependent cmnm(5)s(2)U34 oxidoreductase stretch occupies residues 252–648 (IGAGLAGCAV…LRARRVGRAG (397 aa)).

This sequence in the N-terminal section; belongs to the methyltransferase superfamily. tRNA (mnm(5)s(2)U34)-methyltransferase family. The protein in the C-terminal section; belongs to the DAO family. It depends on FAD as a cofactor.

The protein localises to the cytoplasm. It carries out the reaction 5-aminomethyl-2-thiouridine(34) in tRNA + S-adenosyl-L-methionine = 5-methylaminomethyl-2-thiouridine(34) in tRNA + S-adenosyl-L-homocysteine + H(+). Functionally, catalyzes the last two steps in the biosynthesis of 5-methylaminomethyl-2-thiouridine (mnm(5)s(2)U) at the wobble position (U34) in tRNA. Catalyzes the FAD-dependent demodification of cmnm(5)s(2)U34 to nm(5)s(2)U34, followed by the transfer of a methyl group from S-adenosyl-L-methionine to nm(5)s(2)U34, to form mnm(5)s(2)U34. This is tRNA 5-methylaminomethyl-2-thiouridine biosynthesis bifunctional protein MnmC from Burkholderia lata (strain ATCC 17760 / DSM 23089 / LMG 22485 / NCIMB 9086 / R18194 / 383).